We begin with the raw amino-acid sequence, 366 residues long: Cytochrome c mitochondrial import factor CYC2 (366 aa).

The N-terminal 50 residues, M1–Y50, are a transit peptide targeting the mitochondrion. One can recognise an FAD-binding FR-type domain in the interval S63–P184.

FAD serves as cofactor.

Its subcellular location is the mitochondrion inner membrane. In terms of biological role, redox component that participates in c-type cytochrome biogenesis in the mitochondrial intermembrane space. May play a role in the reduction of heme prior to its ligation to apocytochrome c by cytochrome c heme lyase. Has oxidoreductase activity in vitro. This is Cytochrome c mitochondrial import factor CYC2 (CYC2) from Saccharomyces cerevisiae (strain ATCC 204508 / S288c) (Baker's yeast).